Consider the following 329-residue polypeptide: Cytosolic arginine sensor for mTORC1 subunit 1 (329 aa).

At Ser14 the chain carries Phosphoserine. 2 ACT domains span residues 72-138 (AEAT…HTLA) and 260-321 (GELW…EVLQ). Residues 111-112 (SV), Gly274, 280-281 (IV), and 300-304 (TFNFD) contribute to the L-arginine site.

It belongs to the GATS family. As to quaternary structure, forms homodimers and heterodimers with CASTOR2. Interacts with the GATOR2 complex which is composed of MIOS, SEC13, SEH1L, WDR24 and WDR59; the interaction is negatively regulated by arginine. Interacts with TM4SF5; the interaction is positively regulated by leucine and is negatively regulated by arginine. In terms of processing, phosphorylation at Ser-14 by AKT1, promoting the interaction between CASTOR1 and RNF167. Post-translationally, ubiquitinated by RNF167 via 'Lys-29'-polyubiquitination, leading to its degradation, releasing the GATOR2 complex. Ubiquitination by RNF167 is promoted by phosphorylation at Ser-14 by AKT1.

The protein resides in the cytoplasm. The protein localises to the cytosol. Its function is as follows. Functions as an intracellular arginine sensor within the amino acid-sensing branch of the TORC1 signaling pathway. As a homodimer or a heterodimer with CASTOR2, binds and inhibits the GATOR subcomplex GATOR2 and thereby mTORC1. Binding of arginine to CASTOR1 allosterically disrupts the interaction of CASTOR1-containing dimers with GATOR2 which can in turn activate mTORC1 and the TORC1 signaling pathway. This Bos taurus (Bovine) protein is Cytosolic arginine sensor for mTORC1 subunit 1.